Consider the following 35-residue polypeptide: Photosystem II reaction center protein M (35 aa).

The helical transmembrane segment at 5 to 25 (ILAFIATALFIIIPTAFLLIL) threads the bilayer.

The protein belongs to the PsbM family. PSII is composed of 1 copy each of membrane proteins PsbA, PsbB, PsbC, PsbD, PsbE, PsbF, PsbH, PsbI, PsbJ, PsbK, PsbL, PsbM, PsbT, PsbX, PsbY, PsbZ, Psb30/Ycf12, at least 3 peripheral proteins of the oxygen-evolving complex and a large number of cofactors. It forms dimeric complexes.

It is found in the plastid. The protein resides in the chloroplast thylakoid membrane. In terms of biological role, one of the components of the core complex of photosystem II (PSII). PSII is a light-driven water:plastoquinone oxidoreductase that uses light energy to abstract electrons from H(2)O, generating O(2) and a proton gradient subsequently used for ATP formation. It consists of a core antenna complex that captures photons, and an electron transfer chain that converts photonic excitation into a charge separation. This subunit is found at the monomer-monomer interface. This Chara vulgaris (Common stonewort) protein is Photosystem II reaction center protein M.